The sequence spans 501 residues: MEQQDQSMKEGRLTLVLALATLIAAFGSSFQYGYNVAAVNSPALLMQQFYNETYYGRTGEFMEDFPLTLLWSVTVSMFPFGGFIGSLLVGPLVNKFGRKGALLFNNIFSIVPAILMGCSRVAKSFELIIISRLLVGICAGVSSNVVPMYLGELAPKNLRGALGVVPQLFITVGILVAQIFGLRNLLANVDGWPILLGLTGVPAALQLVLLPFFPESPRYLLIQKKDEAAAKKALQTLRGWDSVDREVAEIRQEDEAEKAAGFISVLKLFRMRSLRWQLLSIIVLMGGQQLSGVNAIYYYADQIYLSAGVPKEHVQFVTAGTGAVNVVMTFCAVFVVELLGRRLLLLLGFSICLVACCVLTAALALQDTVSWMPYISIVCVISYVIGHALGPSPIPALLITEIFLQSSRPSAFMVGGSVHWLSNFTVGLIFPFIQEGLGPYSFIVFAVICLLTTIYIFLIVPETKAKTFIEINQIFTKMNKVSEVYPEKEELKELPPVTLEQ.

The residue at position 1 (Met-1) is an N-acetylmethionine. Over 1–18 (MEQQDQSMKEGRLTLVLA) the chain is Cytoplasmic. The helical transmembrane segment at 19 to 39 (LATLIAAFGSSFQYGYNVAAV) threads the bilayer. Tyr-32 contributes to the D-fructose binding site. Residues 40 to 68 (NSPALLMQQFYNETYYGRTGEFMEDFPLT) lie on the Extracellular side of the membrane. A glycan (N-linked (GlcNAc...) asparagine) is linked at Asn-51. Residues 69–91 (LLWSVTVSMFPFGGFIGSLLVGP) form a helical membrane-spanning segment. Topologically, residues 92-98 (LVNKFGR) are cytoplasmic. Residues 99-119 (KGALLFNNIFSIVPAILMGCS) form a helical membrane-spanning segment. Residues 120–126 (RVAKSFE) lie on the Extracellular side of the membrane. The chain crosses the membrane as a helical span at residues 127-149 (LIIISRLLVGICAGVSSNVVPMY). The Cytoplasmic segment spans residues 150–161 (LGELAPKNLRGA). Residues 162-182 (LGVVPQLFITVGILVAQIFGL) form a helical membrane-spanning segment. A D-fructose-binding site is contributed by Gln-167. Residues 183–192 (RNLLANVDGW) lie on the Extracellular side of the membrane. Residues 193–213 (PILLGLTGVPAALQLVLLPFF) form a helical membrane-spanning segment. Topologically, residues 214 to 277 (PESPRYLLIQ…LFRMRSLRWQ (64 aa)) are cytoplasmic. Residues 278 to 298 (LLSIIVLMGGQQLSGVNAIYY) traverse the membrane as a helical segment. D-fructose contacts are provided by residues Gln-288 and 296-298 (IYY). At 299–313 (YADQIYLSAGVPKEH) the chain is on the extracellular side. Residues 314-334 (VQFVTAGTGAVNVVMTFCAVF) form a helical membrane-spanning segment. At 335-342 (VVELLGRR) the chain is on the cytoplasmic side. The helical transmembrane segment at 343–363 (LLLLLGFSICLVACCVLTAAL) threads the bilayer. Residues 364 to 371 (ALQDTVSW) lie on the Extracellular side of the membrane. Residues 372–394 (MPYISIVCVISYVIGHALGPSPI) traverse the membrane as a helical segment. His-387 contributes to the D-fructose binding site. Residues 395-412 (PALLITEIFLQSSRPSAF) are Cytoplasmic-facing. Residues 413-433 (MVGGSVHWLSNFTVGLIFPFI) form a helical membrane-spanning segment. 419 to 420 (HW) provides a ligand contact to D-fructose. Residues 434 to 439 (QEGLGP) lie on the Extracellular side of the membrane. A helical transmembrane segment spans residues 440 to 460 (YSFIVFAVICLLTTIYIFLIV). The Cytoplasmic portion of the chain corresponds to 461–501 (PETKAKTFIEINQIFTKMNKVSEVYPEKEELKELPPVTLEQ).

Belongs to the major facilitator superfamily. Sugar transporter (TC 2.A.1.1) family. Glucose transporter subfamily.

It is found in the apical cell membrane. It localises to the cell membrane. The protein localises to the sarcolemma. It catalyses the reaction D-fructose(out) = D-fructose(in). In terms of biological role, functions as a fructose transporter that has only low activity with other monosaccharides. Can mediate the uptake of deoxyglucose, but with low efficiency. Essential for fructose uptake in the small intestine. Plays a role in the regulation of salt uptake and blood pressure in response to dietary fructose. Required for the development of high blood pressure in response to high dietary fructose intake. The protein is Solute carrier family 2, facilitated glucose transporter member 5 of Pongo abelii (Sumatran orangutan).